The following is a 146-amino-acid chain: MLRNASAQILKQFVRHRTTDASLTLEKSINKVQILGRVGQDPVMRQVEGRNPVTIFSMATNEMWRSGEGEPVGAGDVTQKTTWHRISVFKPGLRDVAYQYVKKGSRIFVEGKLDYGEYVDKNNVRRQATTIIADNIVFLSENLRDQ.

Residues 1–16 (MLRNASAQILKQFVRH) constitute a mitochondrion transit peptide. An SSB domain is found at 29–140 (INKVQILGRV…IIADNIVFLS (112 aa)).

The protein localises to the mitochondrion. It is found in the mitochondrion matrix. The protein resides in the mitochondrion nucleoid. In terms of biological role, binds preferentially and cooperatively to pyrimidine rich single-stranded DNA (ss-DNA). May be required to maintain the copy number of mitochondrial DNA (mtDNA) and play a crucial role during mtDNA replication. Required for retinal ganglion cell differentiation and retinal integrity. The chain is Single-stranded DNA-binding protein, mitochondrial from Danio rerio (Zebrafish).